The sequence spans 693 residues: Golgin subfamily A member 6B (693 aa).

Positions 1–11 (MWPQPYLPPHP) are enriched in pro residues. 4 disordered regions span residues 1–72 (MWPQ…SQYQ), 497–551 (LPGE…VERR), 629–650 (NPAD…AGEQ), and 660–679 (NNVE…DNPT). Residues 77–611 (ALESSSVTIS…KLLELQELVL (535 aa)) are a coiled coil. The segment covering 537–551 (LPKEKADGTEQVERR) has biased composition (basic and acidic residues).

The protein belongs to the GOLGA6 family.

The polypeptide is Golgin subfamily A member 6B (GOLGA6B) (Homo sapiens (Human)).